The primary structure comprises 198 residues: Protein GrpE (198 aa).

A disordered region spans residues 1-56 (MVEKKKSQAEKNNQSATEEEIEKAVKGSKRDSNAADEKNSASAAASSSAVSDAEPA). Residues 22-39 (EKAVKGSKRDSNAADEKN) are compositionally biased toward basic and acidic residues. A compositionally biased stretch (low complexity) spans 40-56 (SASAAASSSAVSDAEPA).

It belongs to the GrpE family. In terms of assembly, homodimer.

It is found in the cytoplasm. Its function is as follows. Participates actively in the response to hyperosmotic and heat shock by preventing the aggregation of stress-denatured proteins, in association with DnaK and GrpE. It is the nucleotide exchange factor for DnaK and may function as a thermosensor. Unfolded proteins bind initially to DnaJ; upon interaction with the DnaJ-bound protein, DnaK hydrolyzes its bound ATP, resulting in the formation of a stable complex. GrpE releases ADP from DnaK; ATP binding to DnaK triggers the release of the substrate protein, thus completing the reaction cycle. Several rounds of ATP-dependent interactions between DnaJ, DnaK and GrpE are required for fully efficient folding. This is Protein GrpE from Oenococcus oeni (strain ATCC BAA-331 / PSU-1).